The chain runs to 232 residues: MTNADPHELQKFSDLAHRWWDPNAEFKPLHDLNPVRLGWIDAHAHLAGKRALDIGCGGGILSESMAGLGAQVKGIDLSTEALGVADLHSLESGISVEYEAIAAEAIAAREPGTYDVVTCMEMLEHVPSPGDIVAACATLVKPGGWVFFSTLNRNLKSYLFAVIGAEYIAQMLPKGTHDYARFIRPSELASFVRATDLHIVEIKGITYHPIGKRFALSNDTDINYLVACRRGA.

4 residues coordinate S-adenosyl-L-methionine: R36, G55, D76, and M120.

Belongs to the methyltransferase superfamily. UbiG/COQ3 family.

The catalysed reaction is a 3-demethylubiquinol + S-adenosyl-L-methionine = a ubiquinol + S-adenosyl-L-homocysteine + H(+). It catalyses the reaction a 3-(all-trans-polyprenyl)benzene-1,2-diol + S-adenosyl-L-methionine = a 2-methoxy-6-(all-trans-polyprenyl)phenol + S-adenosyl-L-homocysteine + H(+). The protein operates within cofactor biosynthesis; ubiquinone biosynthesis. O-methyltransferase that catalyzes the 2 O-methylation steps in the ubiquinone biosynthetic pathway. This Burkholderia orbicola (strain MC0-3) protein is Ubiquinone biosynthesis O-methyltransferase.